Reading from the N-terminus, the 128-residue chain is UPF0325 protein NT01EI_0832 (128 aa).

This sequence belongs to the UPF0325 family.

The protein is UPF0325 protein NT01EI_0832 of Edwardsiella ictaluri (strain 93-146).